A 281-amino-acid chain; its full sequence is Small ribosomal subunit protein uS3 (281 aa).

The region spanning 38-106 is the KH type-2 domain; the sequence is IRRLLSTGLE…QVQLNILEVK (69 aa). A disordered region spans residues 218–281; the sequence is APAGAERARR…VTHEPQIAES (64 aa). A compositionally biased stretch (low complexity) spans 238 to 252; the sequence is SGAAGTTVTGTDAGR.

The protein belongs to the universal ribosomal protein uS3 family. Part of the 30S ribosomal subunit. Forms a tight complex with proteins S10 and S14.

In terms of biological role, binds the lower part of the 30S subunit head. Binds mRNA in the 70S ribosome, positioning it for translation. This is Small ribosomal subunit protein uS3 from Mycobacterium leprae (strain TN).